The primary structure comprises 188 residues: Elongation factor P (188 aa).

Lys34 carries the N6-(3,6-diaminohexanoyl)-5-hydroxylysine modification.

Belongs to the elongation factor P family. Is beta-lysylated on the epsilon-amino group of Lys-34 by the combined action of EpmA and EpmB, and then hydroxylated on the C5 position of the same residue by EpmC. Lysylation is critical for the stimulatory effect of EF-P on peptide-bond formation. The lysylation moiety would extend toward the peptidyltransferase center and stabilize the terminal 3-CCA end of the tRNA. The hydroxylation of the C5 position on Lys-34 would allow additional potential stabilizing hydrogen-bond interactions with the P-tRNA.

Its subcellular location is the cytoplasm. Its pathway is protein biosynthesis; polypeptide chain elongation. Functionally, involved in peptide bond synthesis. Alleviates ribosome stalling that occurs when 3 or more consecutive Pro residues or the sequence PPG is present in a protein, possibly by augmenting the peptidyl transferase activity of the ribosome. Modification of Lys-34 is required for alleviation. The protein is Elongation factor P of Shigella boydii serotype 18 (strain CDC 3083-94 / BS512).